Reading from the N-terminus, the 1061-residue chain is TonB-dependent transporter Oar (1061 aa).

The first 26 residues, 1 to 26 (MHLNRVLRETGVVVAAGLLYGSAAFA), serve as a signal peptide directing secretion. Residues 121–243 (EIVGAPPTID…TGGVINAVTR (123 aa)) enclose the TBDR plug domain. The 814-residue stretch at 248 to 1061 (EFHGSVFANW…QVRFGIRYTF (814 aa)) folds into the TBDR beta-barrel domain. A disordered region spans residues 701–722 (RSLAEPGQGTATSCDPSSFESQ). The span at 709–722 (GTATSCDPSSFESQ) shows a compositional bias: polar residues.

The protein belongs to the TonB-dependent receptor family. As to quaternary structure, interacts with TonB. Part of a transport system composed of the outer membrane transporter Oar, the trans-periplasmic binding protein TonB and the inner membrane proteins ExbB and ExbD.

Its subcellular location is the cell outer membrane. Its function is as follows. Required for secretion of the protease PopC across the bacterial outer membrane. Binds and probably transports PopC from the periplasm to the extracellular milieu. It derives its energy for transport by interacting with the trans-periplasmic membrane protein TonB. Required for cellular adhesion during fruiting body formation, a multicellular developmental program that is induced in response to starvation. The chain is TonB-dependent transporter Oar from Myxococcus xanthus.